The primary structure comprises 518 residues: ATP synthase subunit beta 2 (518 aa).

154-161 is a binding site for ATP; sequence GGAGVGKT. Positions 455–518 are disordered; it reads IDEAKGKAKP…TDHAADTHES (64 aa). Basic and acidic residues-rich tracts occupy residues 473–485 and 507–518; these read PDSKTEARADPKP and PETDHAADTHES.

Belongs to the ATPase alpha/beta chains family. In terms of assembly, F-type ATPases have 2 components, CF(1) - the catalytic core - and CF(0) - the membrane proton channel. CF(1) has five subunits: alpha(3), beta(3), gamma(1), delta(1), epsilon(1). CF(0) has three main subunits: a(1), b(2) and c(9-12). The alpha and beta chains form an alternating ring which encloses part of the gamma chain. CF(1) is attached to CF(0) by a central stalk formed by the gamma and epsilon chains, while a peripheral stalk is formed by the delta and b chains.

It localises to the cell inner membrane. The enzyme catalyses ATP + H2O + 4 H(+)(in) = ADP + phosphate + 5 H(+)(out). Produces ATP from ADP in the presence of a proton gradient across the membrane. The catalytic sites are hosted primarily by the beta subunits. The polypeptide is ATP synthase subunit beta 2 (Albidiferax ferrireducens (strain ATCC BAA-621 / DSM 15236 / T118) (Rhodoferax ferrireducens)).